The chain runs to 325 residues: Palmitoyltransferase PFA3 (325 aa).

The Cytoplasmic segment spans residues 1 to 5; that stretch reads MLLDR. A helical transmembrane segment spans residues 6-26; the sequence is IGFYFPKALSNFLILYTCCIC. Residues 27–35 are Lumenal-facing; sequence FSRIDILPR. The helical transmembrane segment at 36-56 threads the bilayer; sequence IVNVVLLITLSSFALYTYWKI. At 57–146 the chain is on the cytoplasmic side; the sequence is IRVGAGSPLE…ASCVGFRNQK (90 aa). One can recognise a DHHC domain in the interval 103 to 153; sequence RFCQTCEIWKPDRCHHCSKCNKCFLKMDHHCPWFASCVGFRNQKFFVQFLA. A helical membrane pass occupies residues 147-167; it reads FFVQFLAYTTVYSLYVLLMTS. Residues 168–185 are Lumenal-facing; it reads AQLYSWFRQMKYKSELLD. Residues 186–206 form a helical membrane-spanning segment; the sequence is LHLLVVWVLSVIAAIATFAFT. Over 207 to 325 the chain is Cytoplasmic; that stretch reads TYTIWLVTKN…LTLRPSIEHI (119 aa).

It belongs to the DHHC palmitoyltransferase family. PFA3 subfamily. Post-translationally, autopalmitoylated.

It localises to the vacuole membrane. The enzyme catalyses L-cysteinyl-[protein] + hexadecanoyl-CoA = S-hexadecanoyl-L-cysteinyl-[protein] + CoA. Its function is as follows. Palmitoyltransferase specific for VAC8. Palmitoylates VAC8 at one or more of its N-terminal cysteine residues, which is required for its proper membrane localization. The chain is Palmitoyltransferase PFA3 (PFA3) from Kluyveromyces lactis (strain ATCC 8585 / CBS 2359 / DSM 70799 / NBRC 1267 / NRRL Y-1140 / WM37) (Yeast).